The chain runs to 604 residues: 3-hydroxy-3-methylglutaryl-coenzyme A reductase (604 aa).

A disordered region spans residues 1–31; the sequence is MDVRRRSEKPAYPTKEFAAGEKPLKPHKQQQ. 2 helical membrane-spanning segments follow: residues 40-62 and 90-110; these read ASDA…FFSV and AIAS…IGFV. The tract at residues 111 to 189 is linker; it reads QSFVSRDNND…PLVTPAASEE (79 aa). The catalytic stretch occupies residues 190–604; sequence DEEIIKSVVQ…STKDVTKASS (415 aa). E283 serves as the catalytic Charge relay system. A glycan (N-linked (GlcNAc...) asparagine) is linked at N347. The active-site Charge relay system is K415. A glycan (N-linked (GlcNAc...) asparagine) is linked at N460. D491 (charge relay system) is an active-site residue. Catalysis depends on H589, which acts as the Proton donor. N-linked (GlcNAc...) asparagine glycosylation is present at N593.

The protein belongs to the HMG-CoA reductase family. Found in protoplasts and leaves submitted to stress. Low levels found in apexes, anthers and roots.

The protein resides in the endoplasmic reticulum membrane. The catalysed reaction is (R)-mevalonate + 2 NADP(+) + CoA = (3S)-3-hydroxy-3-methylglutaryl-CoA + 2 NADPH + 2 H(+). The protein operates within metabolic intermediate biosynthesis; (R)-mevalonate biosynthesis; (R)-mevalonate from acetyl-CoA: step 3/3. Its function is as follows. Catalyzes the synthesis of mevalonate, the specific precursor of all isoprenoid compounds present in plants. Possible role in plant defense mechanisms as well as in the cell cycle. This chain is 3-hydroxy-3-methylglutaryl-coenzyme A reductase (HMGR), found in Nicotiana sylvestris (Wood tobacco).